The sequence spans 253 residues: Triosephosphate isomerase, cytosolic (253 aa).

Substrate contacts are provided by Asn10 and Lys12. Residue His96 is the Electrophile of the active site. Glu166 serves as the catalytic Proton acceptor.

It belongs to the triosephosphate isomerase family. In terms of assembly, homodimer.

It localises to the cytoplasm. It carries out the reaction D-glyceraldehyde 3-phosphate = dihydroxyacetone phosphate. It participates in carbohydrate biosynthesis; gluconeogenesis. The protein operates within carbohydrate degradation; glycolysis; D-glyceraldehyde 3-phosphate from glycerone phosphate: step 1/1. The chain is Triosephosphate isomerase, cytosolic from Coptis japonica (Japanese goldthread).